Here is a 92-residue protein sequence, read N- to C-terminus: Small ribosomal subunit protein uS19 (92 aa).

It belongs to the universal ribosomal protein uS19 family.

Its function is as follows. Protein S19 forms a complex with S13 that binds strongly to the 16S ribosomal RNA. This Paramagnetospirillum magneticum (strain ATCC 700264 / AMB-1) (Magnetospirillum magneticum) protein is Small ribosomal subunit protein uS19.